The sequence spans 426 residues: D-ribulose kinase (426 aa).

Substrate-binding positions include Asp-8, 12-15 (SGAR), Ser-72, and Asp-221. Residues Ser-243, Gly-281, and 376-380 (GGAKN) contribute to the ATP site.

Belongs to the FGGY kinase family. The cofactor is a divalent metal cation.

The enzyme catalyses D-ribulose + ATP = D-ribulose 5-phosphate + ADP + H(+). Functionally, exhibits ATP hydrolysis without substrate. Phosphorylates D-ribulose. The sequence is that of D-ribulose kinase from Synechococcus elongatus (strain ATCC 33912 / PCC 7942 / FACHB-805) (Anacystis nidulans R2).